The following is a 797-amino-acid chain: G-type lectin S-receptor-like serine/threonine-protein kinase SD2-2 (797 aa).

An N-terminal signal peptide occupies residues 1–23 (MPCTTYLPLLLLLFLLPPPSVQS). Residues 24-139 (KVIIKGNQTI…DGSPVWQSFD (116 aa)) form the Bulb-type lectin domain. The Extracellular portion of the chain corresponds to 24-401 (KVIIKGNQTI…KNSKGNISKS (378 aa)). Residues Asn-30, Asn-49, Asn-150, and Asn-197 are each glycosylated (N-linked (GlcNAc...) asparagine). Positions 274-310 (PEDPCRVYNLCGQLGFCSSELLKPCACIRGFRPRNDA) constitute an EGF-like; atypical domain. Disulfide bonds link Cys-278/Cys-290, Cys-284/Cys-298, Cys-359/Cys-381, and Cys-363/Cys-369. A PAN domain is found at 321-407 (CRRENGDSGE…ISKSIIILCS (87 aa)). Asn-366 and Asn-397 each carry an N-linked (GlcNAc...) asparagine glycan. The chain crosses the membrane as a helical span at residues 402-422 (IIILCSVVGSISVLGFTLLVP). Over 423–797 (LILLKRSRKR…SRSSFGRPSP (375 aa)) the chain is Cytoplasmic. The region spanning 461 to 742 (NGFSDKVGHG…TVVKMLEGVV (282 aa)) is the Protein kinase domain. ATP is bound by residues 467-475 (VGHGGFGAV) and Lys-490. A caM-binding region spans residues 550–566 (SPKLLSWETRFRIALGT). Residue Asp-585 is the Proton acceptor of the active site. The interval 767 to 797 (GTSCSEGHGCSDLNTGLSSPGSRSSFGRPSP) is disordered. Residues 784–797 (SSPGSRSSFGRPSP) show a composition bias toward low complexity.

Belongs to the protein kinase superfamily. Ser/Thr protein kinase family. Post-translationally, autophosphorylated. As to expression, expressed in the shoot apex and roots, specifically in lateral roots and at the root-hypocotyl transition zone.

It localises to the cell membrane. It carries out the reaction L-seryl-[protein] + ATP = O-phospho-L-seryl-[protein] + ADP + H(+). The enzyme catalyses L-threonyl-[protein] + ATP = O-phospho-L-threonyl-[protein] + ADP + H(+). Functionally, serine/threonine-protein kinase. The polypeptide is G-type lectin S-receptor-like serine/threonine-protein kinase SD2-2 (SD22) (Arabidopsis thaliana (Mouse-ear cress)).